A 381-amino-acid chain; its full sequence is MTAATLFTPSITPQFDKASIDIDVNHHDKTTDIEQMLYDDVDDRNDDFMDEQADNILADTQSLTESVHFRKLQKKLRRQVSWAIRDFNMIEDGDVVMVCVSGGKDSYTLLDILLLLKRIAPIHFDIVAVNLDQKQPGYPEEVLPAYLNEQGIAHYILEKDTYSIVKSVVPEGKTYCSACSRLRRGSLYGFAKQIGATKIALGHHRDDMLATFFLNLFHGGALKSMPPKLLSDDKQNMLIRPLAYVEEKDIIEYSNLKEFPIIPCNLCGSQTNLQRAIINDMLREWDDAHPQRLASIFKAMQNVAPSQLADRELFDFETLSLDRDDNERLFEGDNIQAGQIESLAEIGLPVSPETQIFNPDFANAEKGSRAPKKIPTINPVI.

Positions 101 to 106 (SGGKDS) match the PP-loop motif motif. 3 residues coordinate [4Fe-4S] cluster: cysteine 176, cysteine 179, and cysteine 267.

This sequence belongs to the TtcA family. As to quaternary structure, homodimer. Mg(2+) serves as cofactor. [4Fe-4S] cluster is required as a cofactor.

It localises to the cytoplasm. The catalysed reaction is cytidine(32) in tRNA + S-sulfanyl-L-cysteinyl-[cysteine desulfurase] + AH2 + ATP = 2-thiocytidine(32) in tRNA + L-cysteinyl-[cysteine desulfurase] + A + AMP + diphosphate + H(+). Its pathway is tRNA modification. Its function is as follows. Catalyzes the ATP-dependent 2-thiolation of cytidine in position 32 of tRNA, to form 2-thiocytidine (s(2)C32). The sulfur atoms are provided by the cysteine/cysteine desulfurase (IscS) system. The protein is tRNA-cytidine(32) 2-sulfurtransferase of Psychrobacter cryohalolentis (strain ATCC BAA-1226 / DSM 17306 / VKM B-2378 / K5).